The primary structure comprises 171 residues: S-ribosylhomocysteine lyase (171 aa).

Residues His54, His58, and Cys128 each contribute to the Fe cation site.

This sequence belongs to the LuxS family. Homodimer. It depends on Fe cation as a cofactor.

The catalysed reaction is S-(5-deoxy-D-ribos-5-yl)-L-homocysteine = (S)-4,5-dihydroxypentane-2,3-dione + L-homocysteine. Involved in the synthesis of autoinducer 2 (AI-2) which is secreted by bacteria and is used to communicate both the cell density and the metabolic potential of the environment. The regulation of gene expression in response to changes in cell density is called quorum sensing. Catalyzes the transformation of S-ribosylhomocysteine (RHC) to homocysteine (HC) and 4,5-dihydroxy-2,3-pentadione (DPD). In Shigella boydii serotype 4 (strain Sb227), this protein is S-ribosylhomocysteine lyase.